A 141-amino-acid chain; its full sequence is Ribosome-binding factor A (141 aa).

The segment at 120-141 (DEALRAQSAGARPAGDEDPYKP) is disordered.

This sequence belongs to the RbfA family. Monomer. Binds 30S ribosomal subunits, but not 50S ribosomal subunits or 70S ribosomes.

It localises to the cytoplasm. Its function is as follows. One of several proteins that assist in the late maturation steps of the functional core of the 30S ribosomal subunit. Associates with free 30S ribosomal subunits (but not with 30S subunits that are part of 70S ribosomes or polysomes). Required for efficient processing of 16S rRNA. May interact with the 5'-terminal helix region of 16S rRNA. The polypeptide is Ribosome-binding factor A (Corynebacterium jeikeium (strain K411)).